Here is a 585-residue protein sequence, read N- to C-terminus: A-type ATP synthase subunit A (585 aa).

231–238 (GPFGSGKT) serves as a coordination point for ATP.

Belongs to the ATPase alpha/beta chains family. Has multiple subunits with at least A(3), B(3), C, D, E, F, H, I and proteolipid K(x).

The protein resides in the cell membrane. It carries out the reaction ATP + H2O + 4 H(+)(in) = ADP + phosphate + 5 H(+)(out). In terms of biological role, component of the A-type ATP synthase that produces ATP from ADP in the presence of a proton gradient across the membrane. The A chain is the catalytic subunit. This is A-type ATP synthase subunit A from Thermococcus gammatolerans (strain DSM 15229 / JCM 11827 / EJ3).